A 407-amino-acid chain; its full sequence is Transcriptional regulator UL34 (407 aa).

2 disordered regions span residues 268–330 (AAGP…EELF) and 388–407 (SPSVTPALTPVTSPITPLCI). Positions 273 to 286 (EADENNDEGEEDDD) are enriched in acidic residues. Residues 287–301 (ELRHSDPAPLHESKK) are compositionally biased toward basic and acidic residues. A compositionally biased stretch (basic residues) spans 302–312 (PRNARRPRTRV).

It belongs to the HHV-5 UL34 protein family.

It localises to the host nucleus. Functionally, acts as a transcriptional repressor of the US3 gene expression through a specific DNA sequence named the transcriptional repressive element (tre). This chain is Transcriptional regulator UL34 (UL34), found in Human cytomegalovirus (strain Towne) (HHV-5).